We begin with the raw amino-acid sequence, 309 residues long: Probable nitrogen assimilation transcriptional activator (309 aa).

Residues 1–57 form the HTH lysR-type domain; it reads MRLEQLQAALRVAETGSFQEAAQKVGCNQSTISRQVKGLEDELGIALFRRQGRMKLT. The H-T-H motif DNA-binding region spans 18–37; that stretch reads FQEAAQKVGCNQSTISRQVK.

It belongs to the LysR transcriptional regulatory family.

Seems to regulate utilization of fixed nitrogen by controlling the expression of a certain gene(s) involved in nitrogen metabolism. In Synechococcus elongatus (strain ATCC 33912 / PCC 7942 / FACHB-805) (Anacystis nidulans R2), this protein is Probable nitrogen assimilation transcriptional activator (ntcB).